The chain runs to 155 residues: Small ribosomal subunit protein uS7c (155 aa).

This sequence belongs to the universal ribosomal protein uS7 family. As to quaternary structure, part of the 30S ribosomal subunit.

Its subcellular location is the plastid. The protein resides in the chloroplast. Its function is as follows. One of the primary rRNA binding proteins, it binds directly to 16S rRNA where it nucleates assembly of the head domain of the 30S subunit. The protein is Small ribosomal subunit protein uS7c (rps7) of Sagittaria latifolia (Broadleaf arrowhead).